We begin with the raw amino-acid sequence, 73 residues long: UPF0154 protein MYCGA5700 (73 aa).

The chain crosses the membrane as a helical span at residues 5–25 (LALGLSIPLCLIVGAFVGYFV).

The protein belongs to the UPF0154 family.

The protein localises to the membrane. The polypeptide is UPF0154 protein MYCGA5700 (Mycoplasmoides gallisepticum (strain R(low / passage 15 / clone 2)) (Mycoplasma gallisepticum)).